The sequence spans 903 residues: Alanine--tRNA ligase (903 aa).

Zn(2+) contacts are provided by histidine 581, histidine 585, cysteine 693, and histidine 697.

Belongs to the class-II aminoacyl-tRNA synthetase family. It depends on Zn(2+) as a cofactor.

It is found in the cytoplasm. It carries out the reaction tRNA(Ala) + L-alanine + ATP = L-alanyl-tRNA(Ala) + AMP + diphosphate. In terms of biological role, catalyzes the attachment of alanine to tRNA(Ala) in a two-step reaction: alanine is first activated by ATP to form Ala-AMP and then transferred to the acceptor end of tRNA(Ala). Also edits incorrectly charged Ser-tRNA(Ala) and Gly-tRNA(Ala) via its editing domain. The protein is Alanine--tRNA ligase of Psychrobacter sp. (strain PRwf-1).